Reading from the N-terminus, the 72-residue chain is Translation initiation factor IF-1 (72 aa).

Residues 1–72 (MAKEDSIEME…SKGRIVYRAR (72 aa)) form the S1-like domain.

The protein belongs to the IF-1 family. In terms of assembly, component of the 30S ribosomal translation pre-initiation complex which assembles on the 30S ribosome in the order IF-2 and IF-3, IF-1 and N-formylmethionyl-tRNA(fMet); mRNA recruitment can occur at any time during PIC assembly.

Its subcellular location is the cytoplasm. Functionally, one of the essential components for the initiation of protein synthesis. Stabilizes the binding of IF-2 and IF-3 on the 30S subunit to which N-formylmethionyl-tRNA(fMet) subsequently binds. Helps modulate mRNA selection, yielding the 30S pre-initiation complex (PIC). Upon addition of the 50S ribosomal subunit IF-1, IF-2 and IF-3 are released leaving the mature 70S translation initiation complex. The polypeptide is Translation initiation factor IF-1 (Nitrosococcus oceani (strain ATCC 19707 / BCRC 17464 / JCM 30415 / NCIMB 11848 / C-107)).